A 136-amino-acid polypeptide reads, in one-letter code: MTERTLILIKPDGVTNGHVGEIIARIERKGLKLAALDLRVADRETAEKHYEEHADKPFFGELVEFITSAPLIAGIVEGERAIDAWRQLAGGTDPVSKATPGTIRGDFALTVGENVVHGSDSPESAEREISIWFPNL.

Lys10, Phe58, Arg86, Thr92, Arg104, and Asn114 together coordinate ATP. Residue His117 is the Pros-phosphohistidine intermediate of the active site.

It belongs to the NDK family. Homotetramer. Requires Mg(2+) as cofactor.

It is found in the cytoplasm. It catalyses the reaction a 2'-deoxyribonucleoside 5'-diphosphate + ATP = a 2'-deoxyribonucleoside 5'-triphosphate + ADP. It carries out the reaction a ribonucleoside 5'-diphosphate + ATP = a ribonucleoside 5'-triphosphate + ADP. In terms of biological role, major role in the synthesis of nucleoside triphosphates other than ATP. The ATP gamma phosphate is transferred to the NDP beta phosphate via a ping-pong mechanism, using a phosphorylated active-site intermediate. In Corynebacterium efficiens (strain DSM 44549 / YS-314 / AJ 12310 / JCM 11189 / NBRC 100395), this protein is Nucleoside diphosphate kinase.